The following is a 1854-amino-acid chain: Dystrophin, isoform D (1854 aa).

Disordered regions lie at residues 1–65 (MTTT…PIYA), 84–161 (GSTT…YEMP), 240–352 (QSPT…MSPA), 516–548 (LKPT…PTPS), 595–650 (TPGG…TSES), 716–740 (VMSK…PSTA), 783–830 (LKLQ…STTP), and 1012–1036 (VSDT…EQSR). 2 stretches are compositionally biased toward low complexity: residues 11 to 37 (QRQQ…QQHQ) and 84 to 96 (GSTT…LQSS). The segment covering 143–157 (GLSSAQPATSASSGN) has biased composition (polar residues). Low complexity predominate over residues 276–296 (QQQQQQQQAGINGQINGNGNQ). Polar residues-rich tracts occupy residues 331 to 345 (TLSR…SSAD) and 518 to 536 (PTST…SNTA). Over residues 595-606 (TPGGGVVGGQAA) the composition is skewed to gly residues. Polar residues predominate over residues 716–727 (VMSKSNSSLGSV). Composition is skewed to low complexity over residues 728 to 740 (TTPS…PSTA) and 783 to 814 (LKLQ…QQIQ). Residues 815-830 (NGFASDDNSSSCSTTP) show a composition bias toward polar residues. 2 Spectrin repeats span residues 936 to 1069 (EHWN…RLDE) and 1072 to 1176 (TKMR…VLCQ). Residues 1179 to 1209 (AQQTHENGDDGRTTSNSGTIGPLPNLGQSVK) are disordered. The 34-residue stretch at 1206-1239 (QSVKPPWERATTAANVPYYIDHERETTHWDHPEM) folds into the WW domain. Residues 1464 to 1520 (KHQAKCNICKEYPIVGFRYRCLKCFNFDMCQKCFFFGRNAKNHKLTHPMHEYCTTTT) form a ZZ-type zinc finger. Zn(2+) contacts are provided by Cys-1469, Cys-1472, Cys-1484, Cys-1487, Cys-1493, Cys-1496, His-1506, and His-1510. Residue Ser-1564 is modified to Phosphoserine. Disordered stretches follow at residues 1673–1701 (EQSG…GEQG) and 1744–1854 (DEPN…ELQK). 2 stretches are compositionally biased toward polar residues: residues 1682–1694 (NGMQ…MTGL) and 1765–1796 (ALNS…QQNG). Residues 1815 to 1826 (QELESINDDLED) are compositionally biased toward acidic residues. Positions 1827-1845 (SSSSNTTNTTTTTTTTATT) are enriched in low complexity.

As to quaternary structure, component of the dystrophin associated protein complex (DAPC). Interacts with Dg, via the Dg WW domain binding sites. As to expression, during embryogenesis and in third instar larvae, expression is seen in pericardial cells of the dorsal vessel and in the ventral nerve cord. Expression is absent from both the embryonic and larval musculature.

The protein localises to the cell membrane. It is found in the sarcolemma. The protein resides in the cytoplasm. It localises to the cytoskeleton. Required for the maintenance of appropriate synaptic retrograde communication and the stabilization of muscle cell architecture or physiology. May play a role in anchoring the cytoskeleton to the plasma membrane. This chain is Dystrophin, isoform D (Dys), found in Drosophila melanogaster (Fruit fly).